Consider the following 137-residue polypeptide: Transcription antitermination protein NusB (137 aa).

Belongs to the NusB family.

Functionally, involved in transcription antitermination. Required for transcription of ribosomal RNA (rRNA) genes. Binds specifically to the boxA antiterminator sequence of the ribosomal RNA (rrn) operons. In Aeromonas hydrophila subsp. hydrophila (strain ATCC 7966 / DSM 30187 / BCRC 13018 / CCUG 14551 / JCM 1027 / KCTC 2358 / NCIMB 9240 / NCTC 8049), this protein is Transcription antitermination protein NusB.